Here is a 226-residue protein sequence, read N- to C-terminus: V-type proton ATPase subunit E (226 aa).

The protein belongs to the V-ATPase E subunit family. V-ATPase is a heteromultimeric enzyme made up of two complexes: the ATP-hydrolytic V1 complex and the proton translocation V0 complex. The V1 complex consists of three catalytic AB heterodimers that form a heterohexamer, three peripheral stalks each consisting of EG heterodimers, one central rotor including subunits D and F, and the regulatory subunits C and H. The proton translocation complex V0 consists of the proton transport subunit a, a ring of proteolipid subunits c9c'', rotary subunit d, subunits e and f, and the accessory subunits vah-19/Ac45 and vah-20/PRR. As to expression, expressed in the excretory cell and syncytial hypodermal cells (at protein level). Expressed in the intestine (at protein level).

It localises to the cytoplasm. Its subcellular location is the apical cell membrane. Subunit of the V1 complex of vacuolar(H+)-ATPase (V-ATPase), a multisubunit enzyme composed of a peripheral complex (V1) that hydrolyzes ATP and a membrane integral complex (V0) that translocates protons. V-ATPase is responsible for acidifying and maintaining the pH of intracellular compartments and in some cell types, is targeted to the plasma membrane, where it is responsible for acidifying the extracellular environment. Regulates pH homeostasis in the intestine. Probably by regulating cytoplasmic pH, required for cell survival in the intestine and hypodermis. Involved in receptor-mediated endocytosis. Involved in embryogenesis and larval development. The polypeptide is V-type proton ATPase subunit E (Caenorhabditis elegans).